The sequence spans 368 residues: Geranylgeranyl pyrophosphate synthase dpfgD (368 aa).

Positions 48, 51, and 80 each coordinate isopentenyl diphosphate. 2 residues coordinate Mg(2+): aspartate 87 and aspartate 91. Residue arginine 96 coordinates dimethylallyl diphosphate. Arginine 97 provides a ligand contact to isopentenyl diphosphate. Dimethylallyl diphosphate contacts are provided by lysine 174, threonine 175, and glutamine 208. Residue aspartate 211 coordinates Mg(2+). Dimethylallyl diphosphate-binding residues include asparagine 215, lysine 225, and lysine 235.

It belongs to the FPP/GGPP synthase family. Requires Mg(2+) as cofactor.

The catalysed reaction is isopentenyl diphosphate + dimethylallyl diphosphate = (2E)-geranyl diphosphate + diphosphate. It catalyses the reaction isopentenyl diphosphate + (2E)-geranyl diphosphate = (2E,6E)-farnesyl diphosphate + diphosphate. The enzyme catalyses isopentenyl diphosphate + (2E,6E)-farnesyl diphosphate = (2E,6E,10E)-geranylgeranyl diphosphate + diphosphate. It participates in secondary metabolite biosynthesis; terpenoid biosynthesis. Functionally, geranylgeranyl pyrophosphate synthase; part of the gene cluster that mediates the biosynthesis of diterpenoid pyrones. The first step of the pathway is the synthesis of the alpha-pyrone moiety by the polyketide synthase dpfgA via condensation of one acetyl-CoA starter unit with 3 malonyl-CoA units and 2 methylations. The alpha-pyrone is then combined with geranylgeranyl pyrophosphate (GGPP) formed by the GGPP synthase dpfgD through the action of the prenyltransferase dpfgC to yield a linear alpha-pyrone diterpenoid. Subsequent steps in the diterpenoid pyrone biosynthetic pathway involve the decalin core formation, which is initiated by the epoxidation of the C10-C11 olefin by the FAD-dependent oxidoreductase dpfgE, and is followed by a cyclization cascade catalyzed by the terpene cyclase dpfgB. The short chain dehydrogenase/reductase dpfgG then oxidizes the 8S hydroxy group to a ketone and the short chain dehydrogenase/reductase dpfgH reduces the ketone to the 8R hydroxy group to yield higginsianin B. Higginsianin B is further methylated by the methyltransferase dpfgI to produce the intermediate named FDDP B. The cytochrome P450 monooxygenase dfgpJ then catalyzes a three-step oxidation at C-27 to generate a carboxylic acid as well as C-26 hydroxylation. Finally, methyltransferase dpfgK methylates the carboxylic acid generated by dpfgJ, yielding the final diterpenoid pyrones from the pathway which were named FDDP D and FDDP E. This chain is Geranylgeranyl pyrophosphate synthase dpfgD, found in Gibberella zeae (strain ATCC MYA-4620 / CBS 123657 / FGSC 9075 / NRRL 31084 / PH-1) (Wheat head blight fungus).